Consider the following 140-residue polypeptide: Nucleoside diphosphate kinase (140 aa).

6 residues coordinate ATP: lysine 11, phenylalanine 59, arginine 87, threonine 93, arginine 104, and asparagine 114. Catalysis depends on histidine 117, which acts as the Pros-phosphohistidine intermediate.

The protein belongs to the NDK family. Homotetramer. Requires Mg(2+) as cofactor.

The protein resides in the cytoplasm. The enzyme catalyses a 2'-deoxyribonucleoside 5'-diphosphate + ATP = a 2'-deoxyribonucleoside 5'-triphosphate + ADP. It carries out the reaction a ribonucleoside 5'-diphosphate + ATP = a ribonucleoside 5'-triphosphate + ADP. In terms of biological role, major role in the synthesis of nucleoside triphosphates other than ATP. The ATP gamma phosphate is transferred to the NDP beta phosphate via a ping-pong mechanism, using a phosphorylated active-site intermediate. The protein is Nucleoside diphosphate kinase of Jannaschia sp. (strain CCS1).